Consider the following 832-residue polypeptide: Golgin subfamily A member 6-like protein 24 (832 aa).

Disordered regions lie at residues 1-107 (MWPQ…QEAL), 303-333 (QEQE…MRRQ), 351-431 (MHEQ…EMWR), 508-652 (QEEM…EQEE), and 664-832 (QEEM…MQEH). The span at 13–27 (LPTHPHLPTHPHLPT) shows a compositional bias: basic residues. The segment covering 37–58 (MSKETRQSKLAEAKEQLTDHHP) has biased composition (basic and acidic residues). Polar residues-rich tracts occupy residues 59 to 69 (QTNPSVGTAAS) and 77 to 89 (NNGT…TSGG). Residues 92 to 107 (SPEDEQKASHQHQEAL) are compositionally biased toward basic and acidic residues. Positions 163–828 (LEQALSAVAT…EVRLRQQEEK (666 aa)) form a coiled coil. Composition is skewed to basic and acidic residues over residues 664-684 (QEEM…KMWE) and 692-832 (QEEK…MQEH).

This sequence belongs to the GOLGA6 family.

This Homo sapiens (Human) protein is Golgin subfamily A member 6-like protein 24.